We begin with the raw amino-acid sequence, 292 residues long: Elongation factor Ts (292 aa).

The involved in Mg(2+) ion dislocation from EF-Tu stretch occupies residues Thr80–Val83.

This sequence belongs to the EF-Ts family.

The protein resides in the cytoplasm. Associates with the EF-Tu.GDP complex and induces the exchange of GDP to GTP. It remains bound to the aminoacyl-tRNA.EF-Tu.GTP complex up to the GTP hydrolysis stage on the ribosome. The chain is Elongation factor Ts from Oenococcus oeni (strain ATCC BAA-331 / PSU-1).